A 347-amino-acid polypeptide reads, in one-letter code: ATPase GET3 (347 aa).

Position 26–33 (26–33) interacts with ATP; sequence KGGVGKTT. Residue D57 is part of the active site. Residues E240 and N267 each contribute to the ATP site. Residues C279 and C282 each coordinate Zn(2+).

The protein belongs to the arsA ATPase family. Homodimer. Component of the Golgi to ER traffic (GET) complex, which is composed of GET1, GET2 and GET3. Within the complex, GET1 and GET2 form a heterotetramer which is stabilized by phosphatidylinositol binding and which binds to the GET3 homodimer. Interacts with the chloride channel protein GEF1.

Its subcellular location is the cytoplasm. The protein resides in the endoplasmic reticulum. The protein localises to the golgi apparatus. Its function is as follows. ATPase required for the post-translational delivery of tail-anchored (TA) proteins to the endoplasmic reticulum. Recognizes and selectively binds the transmembrane domain of TA proteins in the cytosol. This complex then targets to the endoplasmic reticulum by membrane-bound receptors GET1 and GET2, where the tail-anchored protein is released for insertion. This process is regulated by ATP binding and hydrolysis. ATP binding drives the homodimer towards the closed dimer state, facilitating recognition of newly synthesized TA membrane proteins. ATP hydrolysis is required for insertion. Subsequently, the homodimer reverts towards the open dimer state, lowering its affinity for the GET1-GET2 receptor, and returning it to the cytosol to initiate a new round of targeting. Cooperates with the HDEL receptor ERD2 to mediate the ATP-dependent retrieval of resident ER proteins that contain a C-terminal H-D-E-L retention signal from the Golgi to the ER. Involved in low-level resistance to the oxyanions arsenite and arsenate, and in heat tolerance. In Scheffersomyces stipitis (strain ATCC 58785 / CBS 6054 / NBRC 10063 / NRRL Y-11545) (Yeast), this protein is ATPase GET3.